The chain runs to 455 residues: MQLPIVAIIGRPNVGKSTLLNRLAGGSEAIVYDQPGVTRDRLYLPAEWCGYRFEVVDTGGLVFEDSEVFLPLIREQVEIALAEAAAVLFVVDGQQGITGGDREVADWLRGRKPPVLIVANKLEEPSTALSLAAEFYALGLGEPYAVSAIHGSGTGDLLDALVAVLPKDQPEEQELPELRVSIVGRPNVGKSSLLNALVGGEHPRSMVSEVAGTTRDAIDTLVEHGERRYRLIDTAGIRRKSRVDYGPEAFGVTRAIRAIRRADVVVLVVDATEGIHDQERNLAAKIASAGRACVLVVNKWDAIEKDTYTMNHYRDEMRRELDFVEWAPVVFTSALTGQRVEKIFDAIDAAAGQHQRRVSTSVLNEALQDALLWRSPPASRQGRQGKVYYATQIATNPPTFVLFVNDTKLFKEGYRRYLEGQFRGSLGFEGSPVRFIFRGKPEREANRTARKSEPV.

EngA-type G domains lie at 4 to 169 (PIVA…PKDQ) and 178 to 355 (LRVS…GQHQ). Residues 10 to 17 (GRPNVGKS), 57 to 61 (DTGGL), 120 to 123 (NKLE), 184 to 191 (GRPNVGKS), 233 to 237 (DTAGI), and 298 to 301 (NKWD) contribute to the GTP site. In terms of domain architecture, KH-like spans 356-441 (RRVSTSVLNE…PVRFIFRGKP (86 aa)).

It belongs to the TRAFAC class TrmE-Era-EngA-EngB-Septin-like GTPase superfamily. EngA (Der) GTPase family. Associates with the 50S ribosomal subunit.

GTPase that plays an essential role in the late steps of ribosome biogenesis. This Gloeobacter violaceus (strain ATCC 29082 / PCC 7421) protein is GTPase Der.